A 65-amino-acid chain; its full sequence is SCOCO-like protein 1 (65 aa).

A coiled-coil region spans residues 8–44 (RSLMEQKAMELQQQLQALLDEIDQNKQESENISRESE).

It belongs to the SLO1 family.

The protein is SCOCO-like protein 1 of Schizosaccharomyces pombe (strain 972 / ATCC 24843) (Fission yeast).